The primary structure comprises 385 residues: DNA double-strand break repair protein Mre11 (385 aa).

Positions 14, 16, and 58 each coordinate Mn(2+). The Proton donor role is filled by H94. Residues H180, H216, and H218 each coordinate Mn(2+).

The protein belongs to the MRE11/RAD32 family. As to quaternary structure, homodimer. Forms a heterotetramer composed of two Mre11 subunits and two Rad50 subunits. Homodimerization facilitates DNA binding. Requires Mn(2+) as cofactor.

With respect to regulation, nuclease activity is regulated by Rad50. The mirin-derivative PFM39, specifically inhibits the 3'-5' exonuclease activity. The N-alkylated mirin-derivatives PFM03 and PFM01 specifically inhibit the endonuclease activity. Functionally, part of the Rad50/Mre11 complex, which is involved in the early steps of DNA double-strand break (DSB) repair. The complex may facilitate opening of the processed DNA ends to aid in the recruitment of HerA and NurA. Mre11 binds to DSB ends and has both double-stranded 3'-5' exonuclease activity and single-stranded endonuclease activity. The protein is DNA double-strand break repair protein Mre11 of Thermotoga maritima (strain ATCC 43589 / DSM 3109 / JCM 10099 / NBRC 100826 / MSB8).